The primary structure comprises 282 residues: Formamidopyrimidine-DNA glycosylase (282 aa).

The Schiff-base intermediate with DNA role is filled by proline 2. Residue glutamate 3 is the Proton donor of the active site. Catalysis depends on lysine 60, which acts as the Proton donor; for beta-elimination activity. The DNA site is built by histidine 99, arginine 118, and lysine 163. The FPG-type zinc-finger motif lies at 248–282 (LVYRRSGKNCKKCGEKILREKICGRSTHWCPNCQK). The active-site Proton donor; for delta-elimination activity is the arginine 272.

Belongs to the FPG family. As to quaternary structure, monomer. Requires Zn(2+) as cofactor.

The enzyme catalyses Hydrolysis of DNA containing ring-opened 7-methylguanine residues, releasing 2,6-diamino-4-hydroxy-5-(N-methyl)formamidopyrimidine.. It carries out the reaction 2'-deoxyribonucleotide-(2'-deoxyribose 5'-phosphate)-2'-deoxyribonucleotide-DNA = a 3'-end 2'-deoxyribonucleotide-(2,3-dehydro-2,3-deoxyribose 5'-phosphate)-DNA + a 5'-end 5'-phospho-2'-deoxyribonucleoside-DNA + H(+). In terms of biological role, involved in base excision repair of DNA damaged by oxidation or by mutagenic agents. Acts as a DNA glycosylase that recognizes and removes damaged bases. Has a preference for oxidized purines, such as 7,8-dihydro-8-oxoguanine (8-oxoG). Has AP (apurinic/apyrimidinic) lyase activity and introduces nicks in the DNA strand. Cleaves the DNA backbone by beta-delta elimination to generate a single-strand break at the site of the removed base with both 3'- and 5'-phosphates. This is Formamidopyrimidine-DNA glycosylase from Prochlorococcus marinus (strain NATL1A).